Consider the following 119-residue polypeptide: Small ribosomal subunit protein uS10 (119 aa).

At alanine 2 the chain carries N-acetylalanine. Lysine 4 is covalently cross-linked (Glycyl lysine isopeptide (Lys-Gly) (interchain with G-Cter in ubiquitin)). Residue lysine 8 is modified to N6-succinyllysine; alternate. Lysine 8 participates in a covalent cross-link: Glycyl lysine isopeptide (Lys-Gly) (interchain with G-Cter in ubiquitin); alternate. Residue threonine 9 is modified to Phosphothreonine. N6-acetyllysine occurs at positions 34 and 75. Phosphoserine is present on serine 93.

It belongs to the universal ribosomal protein uS10 family. In terms of assembly, component of the 40S small ribosomal subunit. Post-translationally, polyubiquitinated by ZNF598 via 'Lys-63'-linked ubiquitin chains when a ribosome has stalled, initiating the ribosome quality control (RQC) pathway to degrade the potentially detrimental aberrant nascent polypeptide. Deubiquitinated by OTUD3 and USP21, antagonizing ZNF598 activity. Ufmylated by UFL1.

It localises to the cytoplasm. Component of the small ribosomal subunit. The ribosome is a large ribonucleoprotein complex responsible for the synthesis of proteins in the cell. This Rattus norvegicus (Rat) protein is Small ribosomal subunit protein uS10 (Rps20).